Reading from the N-terminus, the 311-residue chain is Serpentine receptor class gamma-6 (311 aa).

Helical transmembrane passes span 24 to 44, 58 to 78, 101 to 121, 148 to 168, 200 to 220, 235 to 255, and 266 to 286; these read MGQL…IYVI, FWLL…FDIF, PLLI…KMVA, LTAC…NILI, YMQI…AILW, IWFA…YLHM, and IFML…VIMI.

It belongs to the nematode receptor-like protein srg family.

The protein resides in the membrane. The polypeptide is Serpentine receptor class gamma-6 (srg-6) (Caenorhabditis elegans).